We begin with the raw amino-acid sequence, 219 residues long: U-scoloptoxin(11)-Sm7a (219 aa).

The N-terminal stretch at 1-15 (MYLFLMINYFVLANS) is a signal peptide.

The protein belongs to the scoloptoxin-11 family. Post-translationally, contains 8 disulfide bonds. As to expression, expressed by the venom gland.

The protein resides in the secreted. The chain is U-scoloptoxin(11)-Sm7a from Scolopendra morsitans (Tanzanian blue ringleg centipede).